A 215-amino-acid polypeptide reads, in one-letter code: S-crystallin 4 (215 aa).

One can recognise a GST N-terminal domain in the interval 2–80; the sequence is PSYTLHYFNH…YLAREFGFHG (79 aa). The region spanning 82–215 is the GST C-terminal domain; the sequence is NNMDMARVDY…YLQKRSRTEF (134 aa).

This sequence belongs to the GST superfamily. Lens.

In terms of biological role, S-crystallins are structural components of squids and octopi eye lens. Contains relatively little if any GST activity. The sequence is that of S-crystallin 4 from Enteroctopus dofleini (North Pacific giant octopus).